The primary structure comprises 193 residues: Xanthine phosphoribosyltransferase (193 aa).

Residues Leu-20 and Thr-27 each coordinate xanthine. 128 to 132 (ANGQA) provides a ligand contact to 5-phospho-alpha-D-ribose 1-diphosphate. A xanthine-binding site is contributed by Lys-156.

This sequence belongs to the purine/pyrimidine phosphoribosyltransferase family. Xpt subfamily. In terms of assembly, homodimer.

It localises to the cytoplasm. It catalyses the reaction XMP + diphosphate = xanthine + 5-phospho-alpha-D-ribose 1-diphosphate. Its pathway is purine metabolism; XMP biosynthesis via salvage pathway; XMP from xanthine: step 1/1. In terms of biological role, converts the preformed base xanthine, a product of nucleic acid breakdown, to xanthosine 5'-monophosphate (XMP), so it can be reused for RNA or DNA synthesis. This chain is Xanthine phosphoribosyltransferase, found in Streptococcus equi subsp. equi (strain 4047).